Consider the following 535-residue polypeptide: Endogenous retrovirus group V member 2 Env polyprotein (535 aa).

The first 21 residues, 1-21, serve as a signal peptide directing secretion; the sequence is MTEKFLFLYLSLLPMPLLSQA. The Extracellular segment spans residues 22 to 321; it reads QWNENSLVSF…NTTQPRQKRA (300 aa). The N-linked (GlcNAc...) asparagine glycan is linked to N68. A helical transmembrane segment spans residues 322–342; that stretch reads LGLILAGMGAAIGMIAPWGGF. Over 343–456 the chain is Cytoplasmic; it reads TYHDVTLRNL…VKSALPSLNW (114 aa). The chain crosses the membrane as a helical span at residues 457 to 477; that stretch reads FVPLLGPATVILLLFLFGPCF. The Extracellular segment spans residues 478–535; the sequence is FNLLIKCVSSRIKQFHMKSPQMERYQLSVIGGPSTYKHISPLDASGQRFRETMEEFSL.

Belongs to the gamma type-C retroviral envelope protein family. Expressed in placenta.

It is found in the membrane. This Homo sapiens (Human) protein is Endogenous retrovirus group V member 2 Env polyprotein (ERVV-2).